The chain runs to 111 residues: Iron-sulfur cluster insertion protein ErpA (111 aa).

Positions 39, 103, and 105 each coordinate iron-sulfur cluster.

It belongs to the HesB/IscA family. Homodimer. It depends on iron-sulfur cluster as a cofactor.

Required for insertion of 4Fe-4S clusters for at least IspG. The polypeptide is Iron-sulfur cluster insertion protein ErpA (Buchnera aphidicola subsp. Cinara cedri (strain Cc)).